The chain runs to 231 residues: Probable transglycosylase SceD (231 aa).

Positions 1-27 (MKKTLLASSLAVGLGIVAGNAGHEAQA) are cleaved as a signal peptide. The tract at residues 92 to 153 (MSAQAPATNN…ESKASEGSSV (62 aa)) is disordered. The span at 96–116 (APATNNVAPSADQSNQVQSQE) shows a compositional bias: polar residues. Positions 119–137 (APQNAQTQQPQASTSNNSQ) are enriched in low complexity. Residues 138-153 (VTATPTESKASEGSSV) show a composition bias toward polar residues.

Belongs to the transglycosylase family. SceD subfamily.

The protein localises to the secreted. In terms of biological role, is able to cleave peptidoglycan and affects clumping and separation of bacterial cells. This is Probable transglycosylase SceD (sceD) from Staphylococcus aureus (strain MRSA252).